We begin with the raw amino-acid sequence, 681 residues long: Cell cycle checkpoint protein RAD17 (681 aa).

The short motif at 17–25 (DWVDPSFDD) is the RAD1-binding motif element. The interval 42–61 (VNNSSHRRKNGPSTLESSRF) is disordered. At Thr55 the chain carries Phosphothreonine. Ser71 and Ser86 each carry phosphoserine. ATP is bound at residue 137-144 (GPPGCGKT). Disordered stretches follow at residues 344 to 377 (SSKG…KPDR) and 606 to 681 (HGMI…SDGT). Phosphoserine is present on Ser359. Residues 432 to 681 (LVEPEEVVEM…IIEDYESDGT (250 aa)) form an interaction with MCM7 region. The span at 631–662 (EPTQATVPETWSLPLSQNSASELPASQPQPFS) shows a compositional bias: polar residues. Thr633 is modified (phosphothreonine; by ATM). A phosphoserine; by ATR and ATM mark is found at Ser646 and Ser656. The segment covering 666–681 (DMEENIIIEDYESDGT) has biased composition (acidic residues).

This sequence belongs to the rad17/RAD24 family. As to quaternary structure, part of a DNA-binding complex containing RFC2, RFC3, RFC4 and RFC5. Interacts with RAD1 and RAD9 within the 9-1-1 (RAD1-RAD9-HUS1) complex. Interacts with RAD9B, POLE, SNU13 and MCM7. DNA damage promotes interaction with ATR or ATM and disrupts interaction with the 9-1-1 (RAD1-RAD9-HUS1) complex. Interacts (when phosphorylated) with NBN; promoting recruitment of the MRN complex to DNA damage sites. Phosphorylation on Ser-646 and Ser-656 is cell cycle-regulated, enhanced by genotoxic stress, and required for activation of checkpoint signaling. Phosphorylation is mediated by ATR upon UV or replication arrest, whereas it may be mediated both by ATR and ATM upon ionizing radiation. Phosphorylation on both sites is required for interaction with RAD1 but dispensable for interaction with RFC3 or RFC4. Phosphorylation at Thr-633 by ATM in response to DNA damage promotes interaction with NBN and recruitment of the MRN complex to DNA damage sites. In terms of tissue distribution, overexpressed in various cancer cell lines and in colon carcinoma (at protein level). Isoform 2 and isoform 3 are the most abundant isoforms in non irradiated cells (at protein level). Ubiquitous at low levels. Highly expressed in testis, where it is expressed within the germinal epithelium of the seminiferous tubuli. Weakly expressed in seminomas (testicular tumors).

The protein resides in the nucleus. Its subcellular location is the chromosome. Functionally, essential for sustained cell growth, maintenance of chromosomal stability, and ATR-dependent checkpoint activation upon DNA damage. Has a weak ATPase activity required for binding to chromatin. Participates in the recruitment of the 9-1-1 (RAD1-RAD9-HUS1) complex and RHNO1 onto chromatin, and in CHEK1 activation. Involved in homologous recombination by mediating recruitment of the MRN complex to DNA damage sites. May also serve as a sensor of DNA replication progression. In Homo sapiens (Human), this protein is Cell cycle checkpoint protein RAD17.